Here is a 242-residue protein sequence, read N- to C-terminus: N-acetylmuramate alpha-1-phosphate uridylyltransferase (242 aa).

UTP is bound by residues 16–18 and Lys-28; that span reads GTR. Asn-113 provides a ligand contact to substrate. A Mg(2+)-binding site is contributed by Asp-115. Asp-158 lines the substrate pocket.

The protein belongs to the nucleotidyltransferase MurU family. As to quaternary structure, monomer. Mg(2+) serves as cofactor.

It catalyses the reaction N-acetyl-alpha-D-muramate 1-phosphate + UDP + H(+) = UDP-N-acetyl-alpha-D-muramate + phosphate. The protein operates within cell wall biogenesis; peptidoglycan recycling. Catalyzes the formation of UDP-N-acetylmuramate (UDP-MurNAc), a crucial precursor of the bacterial peptidoglycan cell wall, from UTP and MurNAc-alpha-1P. Is likely involved in peptidoglycan recycling as part of a cell wall recycling pathway that bypasses de novo biosynthesis of the peptidoglycan precursor UDP-MurNAc. Is able to complement the fosfomycin sensitivity phenotype of a P.putida mutant lacking murU. The sequence is that of N-acetylmuramate alpha-1-phosphate uridylyltransferase from Caulobacter vibrioides (strain ATCC 19089 / CIP 103742 / CB 15) (Caulobacter crescentus).